The primary structure comprises 321 residues: Coiled-coil domain-containing protein 42-like 1 (321 aa).

Coiled coils occupy residues 36–144 (IRRL…EKCH) and 202–229 (IVQFSNEIHRLYIRLEKAKKKRREWELR).

This sequence belongs to the CFAP73 family.

The sequence is that of Coiled-coil domain-containing protein 42-like 1 from Xenopus laevis (African clawed frog).